A 161-amino-acid chain; its full sequence is Allophycocyanin beta chain (161 aa).

Asparagine 71 bears the N4-methylasparagine mark. Residue cysteine 81 coordinates (2R,3E)-phycocyanobilin.

Belongs to the phycobiliprotein family. Heterodimer of an alpha and a beta chain. Post-translationally, contains one covalently linked phycocyanobilin chromophore.

The protein resides in the cellular thylakoid membrane. Functionally, light-harvesting photosynthetic bile pigment-protein from the phycobiliprotein complex. Allophycocyanin has a maximum absorption at approximately 650 nanometers. The protein is Allophycocyanin beta chain (apcB) of Thermosynechococcus vestitus (strain NIES-2133 / IAM M-273 / BP-1).